Here is a 121-residue protein sequence, read N- to C-terminus: Flagellar protein FliT (121 aa).

A required for homodimerization region spans residues 1–50 (MNNAPHLYFAWQQLVEKSQLMLRLATEEQWDELIASEMAYVNAVQEIAHL). The tract at residues 60–98 (MQEQLRPMLHLILDNESKVKQLLQIRMDELAKLVGQSSV) is fliD binding.

The protein belongs to the FliT family. In terms of assembly, homodimer. Interacts with FliD and FlhC.

Its subcellular location is the cytoplasm. The protein localises to the cytosol. Functionally, dual-function protein that regulates the transcription of class 2 flagellar operons and that also acts as an export chaperone for the filament-capping protein FliD. As a transcriptional regulator, acts as an anti-FlhDC factor; it directly binds FlhC, thus inhibiting the binding of the FlhC/FlhD complex to class 2 promoters, resulting in decreased expression of class 2 flagellar operons. As a chaperone, effects FliD transition to the membrane by preventing its premature polymerization, and by directing it to the export apparatus. This is Flagellar protein FliT from Shigella flexneri serotype 5b (strain 8401).